Consider the following 530-residue polypeptide: Phosphoenolpyruvate carboxykinase (ATP) (530 aa).

3 residues coordinate substrate: Arg57, Tyr193, and Lys199. Residues Lys199, His218, and 234 to 242 (GLSGTGKTT) contribute to the ATP site. Lys199 and His218 together coordinate Mn(2+). Asp255 provides a ligand contact to Mn(2+). ATP is bound by residues Glu283, Arg320, and Thr445. Residue Arg320 coordinates substrate.

Belongs to the phosphoenolpyruvate carboxykinase (ATP) family. It depends on Mn(2+) as a cofactor.

Its subcellular location is the cytoplasm. It carries out the reaction oxaloacetate + ATP = phosphoenolpyruvate + ADP + CO2. It functions in the pathway carbohydrate biosynthesis; gluconeogenesis. In terms of biological role, involved in the gluconeogenesis. Catalyzes the conversion of oxaloacetate (OAA) to phosphoenolpyruvate (PEP) through direct phosphoryl transfer between the nucleoside triphosphate and OAA. In Leptospira biflexa serovar Patoc (strain Patoc 1 / Ames), this protein is Phosphoenolpyruvate carboxykinase (ATP).